We begin with the raw amino-acid sequence, 332 residues long: MEQWLESAPGWTNVAVFFGLGALLLLVVLGFVTYAILAERKVMGFMQGRIGPNQVGGRLGLLQTVADVLKLLLKEDTIPKAADRPLYVLAPIIAFTPSFMVLAALPFTDAFRFADIGVGLLYYIAVSGLTTIGVVTGGWASNNKYALLGGMRAAAQMISYEIPLVMSALGVVLLAGSMNLVDIVTAQDNVWFIFAQPLAFLIFFIAAVAELNRVPFDLPEAESELVSGFHVEYSGFRWAFFMLAEYVYLFAMAALITILFLGGWHPVAFLGWIPGSVWFALKFCAIVYVLIWFRATFPRVRADQLMEFAWKVLLPLSLVNIVLTAVIKSLFF.

Transmembrane regions (helical) follow at residues 16-36, 87-107, 116-136, 164-184, 190-210, 231-251, 253-273, 277-297, and 312-332; these read VFFGLGALLLLVVLGFVTYAI, YVLAPIIAFTPSFMVLAALPF, IGVGLLYYIAVSGLTTIGVVT, LVMSALGVVLLAGSMNLVDIV, VWFIFAQPLAFLIFFIAAVAE, VEYSGFRWAFFMLAEYVYLFA, AALITILFLGGWHPVAFLGWI, VWFALKFCAIVYVLIWFRATF, and VLLPLSLVNIVLTAVIKSLFF.

It belongs to the complex I subunit 1 family. As to quaternary structure, NDH-1 is composed of 14 different subunits. Subunits NuoA, H, J, K, L, M, N constitute the membrane sector of the complex.

The protein resides in the cell membrane. It carries out the reaction a quinone + NADH + 5 H(+)(in) = a quinol + NAD(+) + 4 H(+)(out). In terms of biological role, NDH-1 shuttles electrons from NADH, via FMN and iron-sulfur (Fe-S) centers, to quinones in the respiratory chain. The immediate electron acceptor for the enzyme in this species is believed to be ubiquinone. Couples the redox reaction to proton translocation (for every two electrons transferred, four hydrogen ions are translocated across the cytoplasmic membrane), and thus conserves the redox energy in a proton gradient. This subunit may bind ubiquinone. This is NADH-quinone oxidoreductase subunit H from Geobacillus thermodenitrificans (strain NG80-2).